The primary structure comprises 118 residues: Myotrophin (118 aa).

ANK repeat units lie at residues 1-30 (MGDKELMWALKNGDLDEVKNILVKAEDVNR), 34-65 (GGRKPLHYAADCGQAEMLEFLLSKGADVNAPD), and 67-98 (HGITPLLSATYEGHVTCVKILLEKGADKNRKG).

The protein belongs to the myotrophin family.

Its subcellular location is the cytoplasm. It is found in the nucleus. The protein resides in the perinuclear region. Functionally, regulates NF-kappa-B transcription factor activity. Promotes growth of cardiomyocytes, but not cardiomyocyte proliferation. Promotes cardiac muscle hypertrophy. Plays a role in the regulation of the growth of actin filaments. Inhibits the activity of the F-actin-capping protein complex. This is Myotrophin (mtpn) from Danio rerio (Zebrafish).